We begin with the raw amino-acid sequence, 252 residues long: Imidazole glycerol phosphate synthase subunit HisF (252 aa).

Active-site residues include aspartate 11 and aspartate 130.

This sequence belongs to the HisA/HisF family. As to quaternary structure, heterodimer of HisH and HisF.

The protein localises to the cytoplasm. The catalysed reaction is 5-[(5-phospho-1-deoxy-D-ribulos-1-ylimino)methylamino]-1-(5-phospho-beta-D-ribosyl)imidazole-4-carboxamide + L-glutamine = D-erythro-1-(imidazol-4-yl)glycerol 3-phosphate + 5-amino-1-(5-phospho-beta-D-ribosyl)imidazole-4-carboxamide + L-glutamate + H(+). The protein operates within amino-acid biosynthesis; L-histidine biosynthesis; L-histidine from 5-phospho-alpha-D-ribose 1-diphosphate: step 5/9. Its function is as follows. IGPS catalyzes the conversion of PRFAR and glutamine to IGP, AICAR and glutamate. The HisF subunit catalyzes the cyclization activity that produces IGP and AICAR from PRFAR using the ammonia provided by the HisH subunit. The chain is Imidazole glycerol phosphate synthase subunit HisF from Anoxybacillus flavithermus (strain DSM 21510 / WK1).